Consider the following 529-residue polypeptide: Bifunctional purine biosynthesis protein PurH (529 aa).

An MGS-like domain is found at 1 to 148 (MQQRRPVRRA…KNHKDVAIVV (148 aa)). Lys-287 carries the post-translational modification N6-acetyllysine.

It belongs to the PurH family.

It carries out the reaction (6R)-10-formyltetrahydrofolate + 5-amino-1-(5-phospho-beta-D-ribosyl)imidazole-4-carboxamide = 5-formamido-1-(5-phospho-D-ribosyl)imidazole-4-carboxamide + (6S)-5,6,7,8-tetrahydrofolate. The enzyme catalyses IMP + H2O = 5-formamido-1-(5-phospho-D-ribosyl)imidazole-4-carboxamide. It functions in the pathway purine metabolism; IMP biosynthesis via de novo pathway; 5-formamido-1-(5-phospho-D-ribosyl)imidazole-4-carboxamide from 5-amino-1-(5-phospho-D-ribosyl)imidazole-4-carboxamide (10-formyl THF route): step 1/1. The protein operates within purine metabolism; IMP biosynthesis via de novo pathway; IMP from 5-formamido-1-(5-phospho-D-ribosyl)imidazole-4-carboxamide: step 1/1. This is Bifunctional purine biosynthesis protein PurH from Escherichia coli O8 (strain IAI1).